The chain runs to 525 residues: Bifunctional purine biosynthesis protein PurH (525 aa).

One can recognise an MGS-like domain in the interval 1–148 (MPSNNLIKNA…KNYKNVIVIV (148 aa)).

This sequence belongs to the PurH family.

It carries out the reaction (6R)-10-formyltetrahydrofolate + 5-amino-1-(5-phospho-beta-D-ribosyl)imidazole-4-carboxamide = 5-formamido-1-(5-phospho-D-ribosyl)imidazole-4-carboxamide + (6S)-5,6,7,8-tetrahydrofolate. The catalysed reaction is IMP + H2O = 5-formamido-1-(5-phospho-D-ribosyl)imidazole-4-carboxamide. It functions in the pathway purine metabolism; IMP biosynthesis via de novo pathway; 5-formamido-1-(5-phospho-D-ribosyl)imidazole-4-carboxamide from 5-amino-1-(5-phospho-D-ribosyl)imidazole-4-carboxamide (10-formyl THF route): step 1/1. It participates in purine metabolism; IMP biosynthesis via de novo pathway; IMP from 5-formamido-1-(5-phospho-D-ribosyl)imidazole-4-carboxamide: step 1/1. This Buchnera aphidicola subsp. Acyrthosiphon pisum (strain 5A) protein is Bifunctional purine biosynthesis protein PurH.